The sequence spans 439 residues: Xylose isomerase (439 aa).

Residues His101 and Asp104 contribute to the active site. Residues Glu232, Glu268, His271, Asp296, Asp307, Asp309, and Asp339 each coordinate Mg(2+).

This sequence belongs to the xylose isomerase family. Homotetramer. Mg(2+) is required as a cofactor.

The protein resides in the cytoplasm. It catalyses the reaction alpha-D-xylose = alpha-D-xylulofuranose. The sequence is that of Xylose isomerase from Photorhabdus laumondii subsp. laumondii (strain DSM 15139 / CIP 105565 / TT01) (Photorhabdus luminescens subsp. laumondii).